Reading from the N-terminus, the 356-residue chain is Trifolitoxin operon protein TfxC (356 aa).

The sequence is that of Trifolitoxin operon protein TfxC (tfxC) from Rhizobium leguminosarum bv. trifolii.